We begin with the raw amino-acid sequence, 452 residues long: GTPase Der (452 aa).

2 EngA-type G domains span residues 4 to 169 (PIVA…PSPD) and 177 to 352 (INVS…EEHR). GTP contacts are provided by residues 10–17 (GRPNVGKS), 57–61 (DTGGL), 120–123 (NKCE), 183–190 (GRPNVGKS), 230–234 (DTAGI), and 295–298 (NKWD). One can recognise a KH-like domain in the interval 353–438 (RRVNTSVVNE…PIRLLWRGKK (86 aa)).

The protein belongs to the TRAFAC class TrmE-Era-EngA-EngB-Septin-like GTPase superfamily. EngA (Der) GTPase family. Associates with the 50S ribosomal subunit.

Its function is as follows. GTPase that plays an essential role in the late steps of ribosome biogenesis. The polypeptide is GTPase Der (Crocosphaera subtropica (strain ATCC 51142 / BH68) (Cyanothece sp. (strain ATCC 51142))).